Reading from the N-terminus, the 77-residue chain is Exodeoxyribonuclease 7 small subunit (77 aa).

This sequence belongs to the XseB family. Heterooligomer composed of large and small subunits.

It localises to the cytoplasm. It catalyses the reaction Exonucleolytic cleavage in either 5'- to 3'- or 3'- to 5'-direction to yield nucleoside 5'-phosphates.. Bidirectionally degrades single-stranded DNA into large acid-insoluble oligonucleotides, which are then degraded further into small acid-soluble oligonucleotides. This is Exodeoxyribonuclease 7 small subunit from Trichlorobacter lovleyi (strain ATCC BAA-1151 / DSM 17278 / SZ) (Geobacter lovleyi).